The primary structure comprises 349 residues: Isopentenyl-diphosphate delta-isomerase (349 aa).

6–7 is a substrate binding site; the sequence is RK. FMN contacts are provided by residues 62–64, Ser93, and Asn122; that span reads AMT. Gln152 is a substrate binding site. Glu153 provides a ligand contact to Mg(2+). Residues Lys184, Thr214, 258 to 259, and 280 to 281 contribute to the FMN site; these read GG and AG.

Belongs to the IPP isomerase type 2 family. As to quaternary structure, homooctamer. Dimer of tetramers. FMN serves as cofactor. Requires NADPH as cofactor. The cofactor is Mg(2+).

Its subcellular location is the cytoplasm. The catalysed reaction is isopentenyl diphosphate = dimethylallyl diphosphate. Involved in the biosynthesis of isoprenoids. Catalyzes the 1,3-allylic rearrangement of the homoallylic substrate isopentenyl (IPP) to its allylic isomer, dimethylallyl diphosphate (DMAPP). The polypeptide is Isopentenyl-diphosphate delta-isomerase (Bacillus cereus (strain 03BB102)).